A 209-amino-acid chain; its full sequence is Large ribosomal subunit protein uL3 (209 aa).

The tract at residues 133-152 is disordered; it reads THGNSLSHRVPGSIGQNQTP. At glutamine 150 the chain carries N5-methylglutamine.

This sequence belongs to the universal ribosomal protein uL3 family. Part of the 50S ribosomal subunit. Forms a cluster with proteins L14 and L19. In terms of processing, methylated by PrmB.

Functionally, one of the primary rRNA binding proteins, it binds directly near the 3'-end of the 23S rRNA, where it nucleates assembly of the 50S subunit. This is Large ribosomal subunit protein uL3 from Sodalis glossinidius (strain morsitans).